The sequence spans 2197 residues: Non-reducing polyketide synthase Preu6 (2197 aa).

Positions 14 to 253 are N-terminal acylcarrier protein transacylase domain (SAT); sequence FFCPQSRAPP…HNPENAELAK (240 aa). The Ketosynthase family 3 (KS3) domain occupies 375-797; sequence DDAIAITGAS…GSNAAVICVE (423 aa). Residues Cys-546, His-681, and His-720 each act as for beta-ketoacyl synthase activity in the active site. The malonyl-CoA:ACP transacylase (MAT) domain stretch occupies residues 901–1198; it reads LVFSGQNTNA…SKPDSQVFQS (298 aa). The active-site For acyl/malonyl transferase activity is Ser-988. The tract at residues 1258–1282 is disordered; sequence ATEASQASTTSDTIQSTPTQTVQSP. Polar residues predominate over residues 1260–1281; that stretch reads EASQASTTSDTIQSTPTQTVQS. Residues 1276-1403 are N-terminal hotdog fold; it reads TQTVQSPPKL…GRVILTESSV (128 aa). A PKS/mFAS DH domain is found at 1276–1576; it reads TQTVQSPPKL…FNKMEISKLA (301 aa). A product template (PT) domain region spans residues 1284–1575; the sequence is KLISRLASLQ…RFNKMEISKL (292 aa). His-1310 acts as the Proton acceptor; for dehydratase activity in catalysis. The tract at residues 1424 to 1576 is C-terminal hotdog fold; sequence AEKLMSSRAY…FNKMEISKLA (153 aa). Asp-1487 (proton donor; for dehydratase activity) is an active-site residue. Positions 1581 to 1591 are enriched in polar residues; that stretch reads SVNASSPTGGR. Residues 1581 to 1614 form a disordered region; it reads SVNASSPTGGRTQPPAAPKTQAQPMASRPSPTPL. Carrier domains lie at 1639–1719 and 1748–1824; these read NDIG…SQKM and NSIT…ATPP. Ser-1673 and Ser-1782 each carry O-(pantetheine 4'-phosphoryl)serine. Residues 1817-1841 form a disordered region; it reads LGASATPPSTTGSSTPGDISTAATT. Residues 1818-1833 show a composition bias toward low complexity; the sequence is GASATPPSTTGSSTPG. Residues 1870 to 2197 are thioesterase (TE) domain; that stretch reads DSYQVKTVEY…PGLDFLIQNA (328 aa). Active-site for thioesterase activity residues include Ser-1990 and Asp-2137.

Pantetheine 4'-phosphate is required as a cofactor.

The catalysed reaction is 6 malonyl-CoA + 2 acetyl-CoA + 5 H(+) = o-orsellinate depside + 6 CO2 + 8 CoA + H2O. Functionally, non-reducing polyketide synthase; part of a gene cluster that mediates the biosynthesis of a yet unidentified natural product. The first step in the pathway is performed by Preu6 that condenses 2 acetyl-CoA starter units with 6 malonyl-CoA units to produce lecanoric acid (LA), also known as orsellinate depside, an intermediate that has significant antifungal activity against the plant pathogen Botryosphaeria berengeriana. The biosynthesis probably occurs via the formation of 2 orsellinate intermediates fused together by the C-terminal thioesterase (TE) domain that finally releases lecanoric acid. The sequence is that of Non-reducing polyketide synthase Preu6 from Preussia isomera (Coprophilous fungus).